Reading from the N-terminus, the 390-residue chain is 8-amino-7-oxononanoate synthase (390 aa).

Arg-19 is a binding site for substrate. Position 106-107 (106-107 (GY)) interacts with pyridoxal 5'-phosphate. Substrate is bound at residue His-131. Positions 176, 204, and 233 each coordinate pyridoxal 5'-phosphate. At Lys-236 the chain carries N6-(pyridoxal phosphate)lysine. Thr-350 is a substrate binding site.

The protein belongs to the class-II pyridoxal-phosphate-dependent aminotransferase family. BioF subfamily. In terms of assembly, homodimer. Pyridoxal 5'-phosphate serves as cofactor.

The enzyme catalyses 6-carboxyhexanoyl-[ACP] + L-alanine + H(+) = (8S)-8-amino-7-oxononanoate + holo-[ACP] + CO2. Its pathway is cofactor biosynthesis; biotin biosynthesis. In terms of biological role, catalyzes the decarboxylative condensation of pimeloyl-[acyl-carrier protein] and L-alanine to produce 8-amino-7-oxononanoate (AON), [acyl-carrier protein], and carbon dioxide. This chain is 8-amino-7-oxononanoate synthase, found in Pseudomonas putida (strain ATCC 700007 / DSM 6899 / JCM 31910 / BCRC 17059 / LMG 24140 / F1).